A 278-amino-acid chain; its full sequence is Phosphatidylglycerol--prolipoprotein diacylglyceryl transferase (278 aa).

The next 3 membrane-spanning stretches (helical) occupy residues 13–33 (LFGIPVYWYAIIIVSGIALAV), 50–70 (VFDFMLWGLPAAIVGARLYYV), and 89–109 (NGGLAIYGGLIGGGLALFFFT). R135 is a binding site for a 1,2-diacyl-sn-glycero-3-phospho-(1'-sn-glycerol). Helical transmembrane passes span 175-195 (QPTFLYESVWNVLGFIVLVLL), 205-225 (GEVFLGYIIWYSFGRFFIEGL), and 236-256 (IRVSQLLSLVMFVAAIVIVIV).

This sequence belongs to the Lgt family.

It localises to the cell membrane. It carries out the reaction L-cysteinyl-[prolipoprotein] + a 1,2-diacyl-sn-glycero-3-phospho-(1'-sn-glycerol) = an S-1,2-diacyl-sn-glyceryl-L-cysteinyl-[prolipoprotein] + sn-glycerol 1-phosphate + H(+). Its pathway is protein modification; lipoprotein biosynthesis (diacylglyceryl transfer). Its function is as follows. Catalyzes the transfer of the diacylglyceryl group from phosphatidylglycerol to the sulfhydryl group of the N-terminal cysteine of a prolipoprotein, the first step in the formation of mature lipoproteins. This chain is Phosphatidylglycerol--prolipoprotein diacylglyceryl transferase, found in Enterococcus faecalis (strain ATCC 700802 / V583).